The primary structure comprises 392 residues: MTFDLASRLAARRAEHLYRRRPLLQSPQGPEVTVDGERLLAFSSNDYLGLANHPEVIAALQQGAATWGVGGGASHLVIGHSTPHHRLEEALAEFTGRPRALLFSTGYMANLAAVTALVGQGDTVLEDRLNHASLLDAGLLSGARFSRYLHNDASSLAKRLEKASGNTLVVTDGVFSMDGDLADLPALCAEAKRHGAWVMVDDAHGFGPLGATGGGIAEHFGLGIDEVPVLVGTLGKAFGTAGAFVAGSEELIETLIQFARPYIYTTSQPPAVACATLKSLELLRSEGWRREHLNRLVARFREGAARIGLTLMASPTPIQPVLVGSSERALRLSALLRERGILVGAIRPPTVPAGSARLRITLTAAHTDAQLERLLEALAECWALMPEECDDA.

Arg19 is a binding site for substrate. Residue 106–107 coordinates pyridoxal 5'-phosphate; that stretch reads GY. His131 provides a ligand contact to substrate. Positions 176, 204, and 233 each coordinate pyridoxal 5'-phosphate. Position 236 is an N6-(pyridoxal phosphate)lysine (Lys236). Thr350 serves as a coordination point for substrate.

It belongs to the class-II pyridoxal-phosphate-dependent aminotransferase family. BioF subfamily. In terms of assembly, homodimer. Pyridoxal 5'-phosphate serves as cofactor.

The enzyme catalyses 6-carboxyhexanoyl-[ACP] + L-alanine + H(+) = (8S)-8-amino-7-oxononanoate + holo-[ACP] + CO2. It participates in cofactor biosynthesis; biotin biosynthesis. In terms of biological role, catalyzes the decarboxylative condensation of pimeloyl-[acyl-carrier protein] and L-alanine to produce 8-amino-7-oxononanoate (AON), [acyl-carrier protein], and carbon dioxide. The chain is 8-amino-7-oxononanoate synthase from Stutzerimonas stutzeri (strain A1501) (Pseudomonas stutzeri).